Consider the following 118-residue polypeptide: Large ribosomal subunit protein bL19 (118 aa).

This sequence belongs to the bacterial ribosomal protein bL19 family.

Its function is as follows. This protein is located at the 30S-50S ribosomal subunit interface and may play a role in the structure and function of the aminoacyl-tRNA binding site. The chain is Large ribosomal subunit protein bL19 from Herpetosiphon aurantiacus (strain ATCC 23779 / DSM 785 / 114-95).